The following is a 61-amino-acid chain: Large ribosomal subunit protein bL32 (61 aa).

The span at 1 to 16 (MAVPKRKTSPSRRGMR) shows a compositional bias: basic residues. Positions 1–61 (MAVPKRKTSP…RQILKPKAEA (61 aa)) are disordered. The span at 28–44 (VEDKDSGELRRPHHLDL) shows a compositional bias: basic and acidic residues.

It belongs to the bacterial ribosomal protein bL32 family.

The sequence is that of Large ribosomal subunit protein bL32 from Xanthobacter autotrophicus (strain ATCC BAA-1158 / Py2).